A 238-amino-acid chain; its full sequence is Ubiquitin-conjugating enzyme E2 R2 (238 aa).

The UBC core domain occupies 8–174 (SSQKALMLEL…IRKQVSATKA (167 aa)). The Glycyl thioester intermediate role is filled by Cys-93. Positions 98–113 (HPPVDDPQSGELPSER) are important for ubiquitin transfer. Residues 194–238 (TKVPSNDNSSDLLYDDLYDDDIDDEDEEEEDADCYDDDDSGNEES) form a disordered region. Over residues 206 to 238 (LYDDLYDDDIDDEDEEEEDADCYDDDDSGNEES) the composition is skewed to acidic residues. Ser-233 carries the post-translational modification Phosphoserine; by CK2.

The protein belongs to the ubiquitin-conjugating enzyme family. In terms of assembly, interacts with multiple Cul1-RING E3 ubiquitin-protein ligase complexes, also known as SCF (SKP1-CUL1-F-box protein) complexes, including SCF(FBXW7) and SCF(BTRC). Interacts with multiple Cul2-RING (CRL2) E3 ubiquitin-protein ligase complexes, also known as ECS (Elongin BC-CUL2/5-SOCS-box protein) complexes, including CRL2(FEM1C) and ECS(VHL). When phosphorylated, interacts with beta-TrCP (BTRC).

The catalysed reaction is S-ubiquitinyl-[E1 ubiquitin-activating enzyme]-L-cysteine + [E2 ubiquitin-conjugating enzyme]-L-cysteine = [E1 ubiquitin-activating enzyme]-L-cysteine + S-ubiquitinyl-[E2 ubiquitin-conjugating enzyme]-L-cysteine.. It functions in the pathway protein modification; protein ubiquitination. With respect to regulation, neddylation of CUL2 in the CRL2(FEM1C) E3 ligase complex increases substrate affinity of UBE2R2 and the ubiquitin-transfer rate in the E2-E3 complex. E2 ubiquitin-conjugating enzyme that accepts ubiquitin from an E1 ubiquitin-activating protein, and catalyzes its covalent attachment to other proteins by an E3 ubiquitin-protein ligase complex. In vitro catalyzes monoubiquitination and 'Lys-48'-linked polyubiquitination. Works in collaboration with various Cul1-RING and Cul2-RING E3 ligase complexes. May be involved in degradation of katenin. The polypeptide is Ubiquitin-conjugating enzyme E2 R2 (UBE2R2) (Homo sapiens (Human)).